The primary structure comprises 265 residues: MEVVARVLLGVNKTNMACQEQPIVPRLVLEVNKNKNVCIAANTPCFVVDGVLMVEQLKTHIKSRMFSNKFVGFVMACFVENEDMVDSINMFPHVFSSRLFIYNPCNHILLEMCGLLSMLKNLNTPSSSLLSAIVERAYYLWTKSRCPDATFLLHGIKTLASTSSYFYGINAPVESIVSPLLMFKLYKCIEDGDPVSKGLLKPIYLTSWKMDTQYDAPSKDLSEKCVFNLFYCNTVFTKHLQHKEVLKLFKCVCTTSTPRSNILSQ.

The protein belongs to the herpesviridae cytoplasmic envelopment protein 1 family.

It localises to the virion. Its subcellular location is the virion tegument. It is found in the host cytoplasm. The protein resides in the host Golgi apparatus. Its function is as follows. Plays a critical role in cytoplasmic virus egress. Participates in the final step of tegumentation and envelope acquisition within the host cytoplasm. In Saimiriine herpesvirus 2 (strain 11) (SaHV-2), this protein is Cytoplasmic envelopment protein 1 (42).